A 35-amino-acid chain; its full sequence is Photosystem II reaction center protein T (35 aa).

A helical transmembrane segment spans residues 3–23; it reads AFAYTLLMTLVVATLFFAVAF.

Belongs to the PsbT family. In terms of assembly, PSII is composed of 1 copy each of membrane proteins PsbA, PsbB, PsbC, PsbD, PsbE, PsbF, PsbH, PsbI, PsbJ, PsbK, PsbL, PsbM, PsbT, PsbX, PsbY, Psb30/Ycf12, peripheral proteins PsbO, CyanoQ (PsbQ), PsbU, PsbV and a large number of cofactors. It forms dimeric complexes.

It localises to the cellular thylakoid membrane. Found at the monomer-monomer interface of the photosystem II (PS II) dimer, plays a role in assembly and dimerization of PSII. PSII is a light-driven water plastoquinone oxidoreductase, using light energy to abstract electrons from H(2)O, generating a proton gradient subsequently used for ATP formation. The polypeptide is Photosystem II reaction center protein T (Prochlorococcus marinus (strain MIT 9303)).